An 834-amino-acid chain; its full sequence is Periplasmic nitrate reductase (834 aa).

Residues M1 to A31 constitute a signal peptide (tat-type signal). The 4Fe-4S Mo/W bis-MGD-type domain maps to I43–D99. Residues C50, C53, C57, and C85 each coordinate [4Fe-4S] cluster. Mo-bis(molybdopterin guanine dinucleotide)-binding positions include K87, Q154, N179, C183, W216–M223, S247–H251, G266–D268, M377, Q381, N487, S513–D514, K536, D563, and T723–S732. W799 provides a ligand contact to substrate. Mo-bis(molybdopterin guanine dinucleotide)-binding residues include N807 and K824.

The protein belongs to the prokaryotic molybdopterin-containing oxidoreductase family. NasA/NapA/NarB subfamily. As to quaternary structure, component of the periplasmic nitrate reductase NapAB complex composed of NapA and NapB. Requires [4Fe-4S] cluster as cofactor. Mo-bis(molybdopterin guanine dinucleotide) is required as a cofactor. Predicted to be exported by the Tat system. The position of the signal peptide cleavage has not been experimentally proven.

It is found in the periplasm. It catalyses the reaction 2 Fe(II)-[cytochrome] + nitrate + 2 H(+) = 2 Fe(III)-[cytochrome] + nitrite + H2O. In terms of biological role, catalytic subunit of the periplasmic nitrate reductase complex NapAB. Receives electrons from NapB and catalyzes the reduction of nitrate to nitrite. The polypeptide is Periplasmic nitrate reductase (Agrobacterium fabrum (strain C58 / ATCC 33970) (Agrobacterium tumefaciens (strain C58))).